The sequence spans 1409 residues: DNA-directed RNA polymerase subunit beta' (1409 aa).

Residues C70, C72, C85, and C88 each coordinate Zn(2+). Residues D460, D462, and D464 each contribute to the Mg(2+) site. Zn(2+) is bound by residues C822, C896, C903, and C906.

It belongs to the RNA polymerase beta' chain family. In terms of assembly, the RNAP catalytic core consists of 2 alpha, 1 beta, 1 beta' and 1 omega subunit. When a sigma factor is associated with the core the holoenzyme is formed, which can initiate transcription. The cofactor is Mg(2+). Zn(2+) serves as cofactor.

It carries out the reaction RNA(n) + a ribonucleoside 5'-triphosphate = RNA(n+1) + diphosphate. DNA-dependent RNA polymerase catalyzes the transcription of DNA into RNA using the four ribonucleoside triphosphates as substrates. The sequence is that of DNA-directed RNA polymerase subunit beta' from Methylobacillus flagellatus (strain ATCC 51484 / DSM 6875 / VKM B-1610 / KT).